A 63-amino-acid chain; its full sequence is Overexpressed in colon carcinoma 1 protein homolog (63 aa).

Positions 1–12 (MGCGNSTAASAG) are enriched in low complexity. A disordered region spans residues 1–40 (MGCGNSTAASAGAGQGPAGAAKDVTEESITEDDKRRNYGG).

This sequence belongs to the OCC1 family.

This Bos taurus (Bovine) protein is Overexpressed in colon carcinoma 1 protein homolog.